The following is a 54-amino-acid chain: Large ribosomal subunit protein bL33A (54 aa).

Belongs to the bacterial ribosomal protein bL33 family.

The chain is Large ribosomal subunit protein bL33A from Mycobacteroides abscessus (strain ATCC 19977 / DSM 44196 / CCUG 20993 / CIP 104536 / JCM 13569 / NCTC 13031 / TMC 1543 / L948) (Mycobacterium abscessus).